We begin with the raw amino-acid sequence, 131 residues long: Large ribosomal subunit protein bL17 (131 aa).

This sequence belongs to the bacterial ribosomal protein bL17 family. As to quaternary structure, part of the 50S ribosomal subunit. Contacts protein L32.

This Bordetella avium (strain 197N) protein is Large ribosomal subunit protein bL17.